The primary structure comprises 470 residues: Metalloreductase STEAP4 (470 aa).

NADP(+) is bound by residues 27-30 (TGDF), 49-50 (SR), Tyr-67, 81-85 (MHREH), Asn-106, and Ala-139. 2 residues coordinate FAD: Trp-140 and Asp-148. Residue Arg-171 coordinates NADP(+). 2 helical membrane-spanning segments follow: residues 202-224 (FPFY…REVI) and 236-256 (YRLA…ILLA). Tyr-217 is a binding site for Fe(3+). A Ferric oxidoreductase domain is found at 247 to 395 (FPITALILLA…LGYLTLVLCT (149 aa)). Residues Gln-269 and Arg-290 each coordinate FAD. A run of 2 helical transmembrane segments spans residues 293–313 (LGLV…VIPI) and 342–362 (AWIN…FLLL). His-304 serves as a coordination point for heme b. Residue Tyr-307 coordinates Fe(3+). 2 residues coordinate FAD: Ser-366 and Gln-383. The next 2 helical transmembrane spans lie at 381–401 (FVQS…TLVY) and 419–439 (AYIL…ILIM). His-397 lines the heme b pocket.

It belongs to the STEAP family. As to quaternary structure, homotrimer. Interacts with PTK2/FAK1; the interaction may regulate PTK2 phosphorylation. It depends on FAD as a cofactor. Heme b serves as cofactor. Expressed in white and brown adipose tissues cells, as well as in muscle and liver cells. Detected in joints and spleens of arthritic mice.

The protein resides in the cell membrane. The protein localises to the golgi apparatus membrane. It localises to the early endosome membrane. It carries out the reaction 2 Fe(2+) + NADP(+) + H(+) = 2 Fe(3+) + NADPH. It catalyses the reaction 2 Cu(+) + NADP(+) + H(+) = 2 Cu(2+) + NADPH. Functionally, integral membrane protein that functions as a NADPH-dependent ferric-chelate reductase, using NADPH from one side of the membrane to reduce a Fe(3+) chelate that is bound on the other side of the membrane. Mediates sequential transmembrane electron transfer from NADPH to FAD and onto heme, and finally to the Fe(3+) chelate. Can also reduce Cu(2+) to Cu(1+). Plays a role in systemic metabolic homeostasis, integrating inflammatory and metabolic responses. Associated with obesity and insulin-resistance. Involved in inflammatory arthritis, through the regulation of inflammatory cytokines. Inhibits anchorage-independent cell proliferation. This is Metalloreductase STEAP4 (Steap4) from Mus musculus (Mouse).